The chain runs to 663 residues: Putative ankyrin repeat protein R219 (663 aa).

ANK repeat units follow at residues 91–118 (FRIK…GYKV), 119–148 (DFDS…KLSS), 200–229 (ANQQ…KDGT), 258–288 (DWHV…KINP), and 322–351 (YFSH…GITV).

In Acanthamoeba polyphaga mimivirus (APMV), this protein is Putative ankyrin repeat protein R219.